A 180-amino-acid polypeptide reads, in one-letter code: Dual-action ribosomal maturation protein DarP (180 aa).

The protein belongs to the DarP family.

The protein resides in the cytoplasm. Its function is as follows. Member of a network of 50S ribosomal subunit biogenesis factors which assembles along the 30S-50S interface, preventing incorrect 23S rRNA structures from forming. Promotes peptidyl transferase center (PTC) maturation. The sequence is that of Dual-action ribosomal maturation protein DarP from Chromobacterium violaceum (strain ATCC 12472 / DSM 30191 / JCM 1249 / CCUG 213 / NBRC 12614 / NCIMB 9131 / NCTC 9757 / MK).